A 394-amino-acid polypeptide reads, in one-letter code: MNKYKRIFLVVMDSVGIGEAPDAEQFGDLGSDTIGHIAEHMNGLHMPNMVKLGLGNIREMKGISKVEKPLGYYTKMQEKSTGKDTMTGHWEIMGLYIDTPFQVFPEGFPKELLDELEEKTGRKIIGNKPASGTEILDELGQEQMETGSLIVYTSADSVLQIAAHEEVVPLDELYKICKIARELTLDEKYMVGRVIARPFVGEPGNFTRTPNRHDYALKPFGRTVMNELKDSDYDVIAIGKISDIYDGEGVTESLRTKSNMDGMDKLVDTLNMDFTGLSFLNLVDFDALFGHRRDPQGYGEALQEYDARLPEVFEKLKEDDLLLITADHGNDPVHHGTDHTREYVPLLAYSPSMKEGGQELPLRQTFADIGATVAENFGVKMPEYGTSFLNELKK.

Mn(2+)-binding residues include D13, D286, H291, D327, H328, and H339.

This sequence belongs to the phosphopentomutase family. Mn(2+) is required as a cofactor.

The protein resides in the cytoplasm. The enzyme catalyses 2-deoxy-alpha-D-ribose 1-phosphate = 2-deoxy-D-ribose 5-phosphate. It catalyses the reaction alpha-D-ribose 1-phosphate = D-ribose 5-phosphate. It participates in carbohydrate degradation; 2-deoxy-D-ribose 1-phosphate degradation; D-glyceraldehyde 3-phosphate and acetaldehyde from 2-deoxy-alpha-D-ribose 1-phosphate: step 1/2. Functionally, isomerase that catalyzes the conversion of deoxy-ribose 1-phosphate (dRib-1-P) and ribose 1-phosphate (Rib-1-P) to deoxy-ribose 5-phosphate (dRib-5-P) and ribose 5-phosphate (Rib-5-P), respectively. This Bacillus thuringiensis (strain Al Hakam) protein is Phosphopentomutase.